Consider the following 177-residue polypeptide: Large ribosomal subunit protein uL6 (177 aa).

Belongs to the universal ribosomal protein uL6 family. Part of the 50S ribosomal subunit.

Functionally, this protein binds to the 23S rRNA, and is important in its secondary structure. It is located near the subunit interface in the base of the L7/L12 stalk, and near the tRNA binding site of the peptidyltransferase center. This Ruegeria pomeroyi (strain ATCC 700808 / DSM 15171 / DSS-3) (Silicibacter pomeroyi) protein is Large ribosomal subunit protein uL6.